The primary structure comprises 470 residues: 3-isopropylmalate dehydratase large subunit (470 aa).

Cys349, Cys409, and Cys412 together coordinate [4Fe-4S] cluster.

It belongs to the aconitase/IPM isomerase family. LeuC type 1 subfamily. In terms of assembly, heterodimer of LeuC and LeuD. It depends on [4Fe-4S] cluster as a cofactor.

It carries out the reaction (2R,3S)-3-isopropylmalate = (2S)-2-isopropylmalate. Its pathway is amino-acid biosynthesis; L-leucine biosynthesis; L-leucine from 3-methyl-2-oxobutanoate: step 2/4. Catalyzes the isomerization between 2-isopropylmalate and 3-isopropylmalate, via the formation of 2-isopropylmaleate. The polypeptide is 3-isopropylmalate dehydratase large subunit (Methylobacterium radiotolerans (strain ATCC 27329 / DSM 1819 / JCM 2831 / NBRC 15690 / NCIMB 10815 / 0-1)).